A 580-amino-acid polypeptide reads, in one-letter code: Rap guanine nucleotide exchange factor 5 (580 aa).

The N-terminal Ras-GEF domain occupies 67–200; that stretch reads DRYVVVSGTP…ELKEFQKILG (134 aa). The Ras-GEF domain occupies 344–579; the sequence is NTWDLALELM…FELSHRLEPR (236 aa).

In the embryo, expressed in young neurons of the developing telencephalon, diencephalon and hindbrain. Not expressed in progenitor cells in the ventricular zone.

It is found in the nucleus. Its function is as follows. Guanine nucleotide exchange factor (GEF) for RAP1A, RAP2A and MRAS/M-Ras-GTP. Its association with MRAS inhibits Rap1 activation. This Rattus norvegicus (Rat) protein is Rap guanine nucleotide exchange factor 5 (Rapgef5).